Here is a 155-residue protein sequence, read N- to C-terminus: Transcriptional regulator MraZ (155 aa).

SpoVT-AbrB domains are found at residues 15 to 62 (TYEN…GMDR) and 93 to 136 (SEEL…NPTA).

Belongs to the MraZ family. Forms oligomers.

It localises to the cytoplasm. The protein localises to the nucleoid. In Rhodospirillum rubrum (strain ATCC 11170 / ATH 1.1.1 / DSM 467 / LMG 4362 / NCIMB 8255 / S1), this protein is Transcriptional regulator MraZ.